Here is a 146-residue protein sequence, read N- to C-terminus: Large ribosomal subunit protein uL13 (146 aa).

Belongs to the universal ribosomal protein uL13 family. Part of the 50S ribosomal subunit.

Its function is as follows. This protein is one of the early assembly proteins of the 50S ribosomal subunit, although it is not seen to bind rRNA by itself. It is important during the early stages of 50S assembly. This is Large ribosomal subunit protein uL13 from Malacoplasma penetrans (strain HF-2) (Mycoplasma penetrans).